Consider the following 202-residue polypeptide: NADH-quinone oxidoreductase subunit C (202 aa).

It belongs to the complex I 30 kDa subunit family. NDH-1 is composed of 14 different subunits. Subunits NuoB, C, D, E, F, and G constitute the peripheral sector of the complex.

It is found in the cell inner membrane. The enzyme catalyses a quinone + NADH + 5 H(+)(in) = a quinol + NAD(+) + 4 H(+)(out). NDH-1 shuttles electrons from NADH, via FMN and iron-sulfur (Fe-S) centers, to quinones in the respiratory chain. The immediate electron acceptor for the enzyme in this species is believed to be ubiquinone. Couples the redox reaction to proton translocation (for every two electrons transferred, four hydrogen ions are translocated across the cytoplasmic membrane), and thus conserves the redox energy in a proton gradient. This chain is NADH-quinone oxidoreductase subunit C, found in Acidithiobacillus ferrooxidans (strain ATCC 23270 / DSM 14882 / CIP 104768 / NCIMB 8455) (Ferrobacillus ferrooxidans (strain ATCC 23270)).